Reading from the N-terminus, the 75-residue chain is UPF0352 protein YejL (75 aa).

This sequence belongs to the UPF0352 family.

In Salmonella arizonae (strain ATCC BAA-731 / CDC346-86 / RSK2980), this protein is UPF0352 protein YejL.